Consider the following 193-residue polypeptide: Cysteine and glycine-rich protein 1 (193 aa).

The LIM zinc-binding 1 domain maps to 10–61; it reads CGVCQKTVYFAEEVQCEGSSFHKSCFLCLVCKKNLDSTTVAVHGEEIYCKSC. Positions 64–69 match the Nuclear localization signal motif; it reads KKYGPK. Ser81 bears the Phosphoserine mark. Residues Lys84, Lys112, Lys131, Lys137, and Lys161 each carry the N6-acetyllysine modification. Residues 119-170 form the LIM zinc-binding 2 domain; it reads CPRCSQAVYAAEKVIGAGKSWHKSCFRCAKCGKGLESTTLADKDGEIYCKGC. Ser192 is modified (phosphoserine).

As to quaternary structure, interacts with ASCC1; ASCC2 and TRIP4.

The protein localises to the nucleus. Its function is as follows. Could play a role in neuronal development. The polypeptide is Cysteine and glycine-rich protein 1 (CSRP1) (Bos taurus (Bovine)).